The chain runs to 338 residues: DNA-directed RNA polymerase subunit alpha (338 aa).

The alpha N-terminal domain (alpha-NTD) stretch occupies residues 1-234 (MIHKNWAELI…DQLSVFVNFD (234 aa)). The tract at residues 250-338 (FDPRLLKKVD…DLAKRFDDQF (89 aa)) is alpha C-terminal domain (alpha-CTD).

Belongs to the RNA polymerase alpha chain family. Homodimer. The RNAP catalytic core consists of 2 alpha, 1 beta, 1 beta' and 1 omega subunit. When a sigma factor is associated with the core the holoenzyme is formed, which can initiate transcription.

The catalysed reaction is RNA(n) + a ribonucleoside 5'-triphosphate = RNA(n+1) + diphosphate. Its function is as follows. DNA-dependent RNA polymerase catalyzes the transcription of DNA into RNA using the four ribonucleoside triphosphates as substrates. This is DNA-directed RNA polymerase subunit alpha from Paracoccus denitrificans (strain Pd 1222).